A 162-amino-acid polypeptide reads, in one-letter code: Interleukin-15 (162 aa).

The N-terminal stretch at 1-29 (MRISKPHLRSISIQCYLCLLLNSHFLTEA) is a signal peptide. Positions 30 to 48 (GIHVFILGCFSAGLPKTEA) are excised as a propeptide. Cystine bridges form between C83–C133 and C90–C136. N127 carries an N-linked (GlcNAc...) asparagine glycan.

This sequence belongs to the IL-15/IL-21 family. As to expression, most abundant in placenta and skeletal muscle. It is also detected in the heart, lung, liver and kidney. IL15-S21AA is preferentially expressed in tissues such as testis and thymus.

The protein localises to the secreted. It is found in the cytoplasm. It localises to the nucleus. Functionally, cytokine that plays a major role in the development of inflammatory and protective immune responses to microbial invaders and parasites by modulating immune cells of both the innate and adaptive immune systems. Stimulates the proliferation of natural killer cells, T-cells and B-cells and promotes the secretion of several cytokines. In monocytes, induces the production of IL8 and monocyte chemotactic protein 1/CCL2, two chemokines that attract neutrophils and monocytes respectively to sites of infection. Unlike most cytokines, which are secreted in soluble form, IL15 is expressed in association with its high affinity IL15RA on the surface of IL15-producing cells and delivers signals to target cells that express IL2RB and IL2RG receptor subunits. Binding to its receptor triggers the phosphorylation of JAK1 and JAK3 and the recruitment and subsequent phosphorylation of signal transducer and activator of transcription-3/STAT3 and STAT5. In mast cells, induces the rapid tyrosine phosphorylation of STAT6 and thereby controls mast cell survival and release of cytokines such as IL4. This Homo sapiens (Human) protein is Interleukin-15 (IL15).